We begin with the raw amino-acid sequence, 350 residues long: Transmembrane protein 185B (350 aa).

7 helical membrane-spanning segments follow: residues 16–36 (LIYA…DGII), 41–61 (WAVF…ASVG), 81–101 (FKAM…EILV), 111–131 (FWLL…AACV), 168–188 (WLVV…VVLY), 211–231 (VTMA…EVLL), and 240–260 (TFSY…LMAT).

Belongs to the TMEM185 family.

It is found in the membrane. In Mus musculus (Mouse), this protein is Transmembrane protein 185B (Tmem185b).